A 258-amino-acid polypeptide reads, in one-letter code: 3-deoxy-manno-octulosonate cytidylyltransferase (258 aa).

The protein belongs to the KdsB family.

It is found in the cytoplasm. The enzyme catalyses 3-deoxy-alpha-D-manno-oct-2-ulosonate + CTP = CMP-3-deoxy-beta-D-manno-octulosonate + diphosphate. It participates in nucleotide-sugar biosynthesis; CMP-3-deoxy-D-manno-octulosonate biosynthesis; CMP-3-deoxy-D-manno-octulosonate from 3-deoxy-D-manno-octulosonate and CTP: step 1/1. It functions in the pathway bacterial outer membrane biogenesis; lipopolysaccharide biosynthesis. In terms of biological role, activates KDO (a required 8-carbon sugar) for incorporation into bacterial lipopolysaccharide in Gram-negative bacteria. The chain is 3-deoxy-manno-octulosonate cytidylyltransferase from Blochmanniella floridana.